The sequence spans 214 residues: Probable GTP-binding protein EngB (214 aa).

The region spanning 22–194 (HLPEIAFAGR…WARIDALLEP (173 aa)) is the EngB-type G domain. Residues 30–37 (GRSNVGKS), 57–61 (GRTQL), 75–78 (DLPG), 142–145 (TKCD), and 173–175 (FSA) each bind GTP. Mg(2+) is bound by residues serine 37 and threonine 59. The interval 195–214 (TAAETPGIPEEPAPPGPVND) is disordered. Pro residues predominate over residues 203–214 (PEEPAPPGPVND).

It belongs to the TRAFAC class TrmE-Era-EngA-EngB-Septin-like GTPase superfamily. EngB GTPase family. Mg(2+) serves as cofactor.

Its function is as follows. Necessary for normal cell division and for the maintenance of normal septation. The chain is Probable GTP-binding protein EngB from Geobacter sp. (strain M21).